Consider the following 321-residue polypeptide: uncharacterized protein (321 aa).

This is an uncharacterized protein from Archaeoglobus fulgidus (strain ATCC 49558 / DSM 4304 / JCM 9628 / NBRC 100126 / VC-16).